The following is a 588-amino-acid chain: Juvenile hormone esterase (588 aa).

The first 23 residues, 1–23 (MKFPKNLFLVLFYTSWKFCDVCA), serve as a signal peptide directing secretion. Asparagine 79 and asparagine 83 each carry an N-linked (GlcNAc...) asparagine glycan. A disulfide bridge links cysteine 91 with cysteine 109. Serine 214 serves as the catalytic Acyl-ester intermediate. An N-linked (GlcNAc...) asparagine glycan is attached at asparagine 257. Cysteine 268 and cysteine 281 are disulfide-bonded. The Charge relay system role is filled by glutamate 350. Asparagine 389, asparagine 396, and asparagine 472 each carry an N-linked (GlcNAc...) asparagine glycan. Histidine 479 functions as the Charge relay system in the catalytic mechanism.

Belongs to the type-B carboxylesterase/lipase family.

It localises to the secreted. It catalyses the reaction juvenile hormone III + H2O = juvenile hormone III carboxylate + methanol + H(+). With respect to regulation, inhibited by 3-octylthio-1,1,1-trifluoro-2-propanone (OTFP), a specific inhibitor of juvenile hormone esterase (JHE), but not by diisopropyl fluorophosphate (DFP), a serine enzyme inhibitor. Functionally, may function as a juvenile hormone (JH)-specific degradation enzyme in vivo decreasing JH activity. Hydrolyzes JH III in vitro. Hydrolyzes effectively also methyl hepthylthioacetothioate (HEPTAT), a synthetic substrate. Of the general esterase substrates, it has preference for 2-naphthyl acetate (2-NA) and shows a weak activity for 1-NA and 4-nitrophenylacetate (4-NPA). The polypeptide is Juvenile hormone esterase (Tribolium castaneum (Red flour beetle)).